We begin with the raw amino-acid sequence, 423 residues long: Putative competence-damage inducible protein (423 aa).

Belongs to the CinA family.

This Streptococcus equi subsp. zooepidemicus (strain H70) protein is Putative competence-damage inducible protein.